The chain runs to 585 residues: MNYKKNSLIKTGAFALIDMLVKHKVKNIFGYPGGAILPIYDELYHWEKKKLIKHYLVRHEQSAAHAADAYARATNEVGVCLATSGPGATNLVTGIATAQMDSVPIIAITGQVSRAFIGTDAFQEVDIFGITLPIVKHSFVVRDPRDISTIVSEAFYISKHGRPGAVLIDVPKDVGLEEFNYHDYDSIRDHKPITKYRPIYGPSIRQIEKFKKMLLESKQPILYVGGGAVMSRAQHEIEELASFIKIPVTTTLMGKGSFNEYNPLYLGMLGMHGTAYANFAVSECDLLIALGARFDDRVTGKLDEFACNAQVIHVDIDPAEIGKNRIPQLAIISDIKIVLKELLSSMKEGTNNMDKNQTQAWLHRIHKWKKEYPLSIPHDSKLLYPQEVINEISQIAQKAFFATDVGQHQMWAAQFLKVEQGKWLSSSGLGTMGYGLPAAIGAKIANPNDLIICITGDASFQMNLQELGTIAQYELDIKIFIINNQWQGMVRQWQQAFYDQRYAHSNMAKGQPDFVQLANSYGIRGIRVTTSKDLKSKIERIISTPGPLLIDCIVATSENCYPMIAPGKSNSQMLGLTKQLKTITN.

Position 60 (Glu60) interacts with thiamine diphosphate. FAD contacts are provided by residues Arg162, 272–293 (HGTA…LGAR), and 315–334 (DIDP…IISD). The segment at 407–486 (QHQMWAAQFL…IKIFIINNQW (80 aa)) is thiamine pyrophosphate binding. 2 residues coordinate Mg(2+): Asp457 and Asn484.

This sequence belongs to the TPP enzyme family. In terms of assembly, dimer of large and small chains. The cofactor is Mg(2+). Thiamine diphosphate is required as a cofactor.

The protein localises to the plastid. The protein resides in the chloroplast. It catalyses the reaction 2 pyruvate + H(+) = (2S)-2-acetolactate + CO2. Its pathway is amino-acid biosynthesis; L-isoleucine biosynthesis; L-isoleucine from 2-oxobutanoate: step 1/4. It participates in amino-acid biosynthesis; L-valine biosynthesis; L-valine from pyruvate: step 1/4. This is Acetolactate synthase large subunit (ilvB) from Cyanidium caldarium (Red alga).